Consider the following 217-residue polypeptide: Eukaryotic translation initiation factor 4E (217 aa).

The interval 1 to 30 (MATVEPETTPTPNPPTTEEEKTESNQEVAN) is disordered. An N-acetylalanine modification is found at Ala2. Thr22 is modified (phosphothreonine). The EIF4EBP1/2/3 binding stretch occupies residues 37–40 (HPLQ). 56 to 57 (WQ) lines the mRNA pocket. The interval 73–77 (WALYN) is EIF4EBP1/2/3 binding. MRNA is bound at residue 102–103 (WE). Residues 132–139 (ETLLCLIG) form an EIF4EBP1/2/3 binding region. Residues 157–162 (RAKGDK) and 205–207 (TKS) contribute to the mRNA site. Phosphoserine; by PKC and MKNK2 is present on Ser209.

The protein belongs to the eukaryotic initiation factor 4E family. EIF4F is a multi-subunit complex, the composition of which varies with external and internal environmental conditions. It is composed of at least EIF4A, EIF4E and EIF4G1/EIF4G3. EIF4E is also known to interact with other partners. Interacts with EIF4ENIF1/4E-T; promotes recruitment to P-bodies and import into the nucleus. Hypophosphorylated EIF4EBP1, EIF4EBP2 and EIF4EBP3 compete with EIF4G1/EIF4G3 to interact with EIF4E; insulin stimulated MAP-kinase (MAPK1 and MAPK3) phosphorylation of EIF4EBP1 causes dissociation of the complex allowing EIF4G1/EIF4G3 to bind and consequent initiation of translation. Interacts mutually exclusive with EIF4A1 or EIF4A2. Interacts with NGDN and PIWIL2. Component of the CYFIP1-EIF4E-FMR1 complex composed of CYFIP, EIF4E and FMR1. Interacts directly with CYFIP1. Interacts with CLOCK. Binds to MKNK2 in nucleus. Interacts with LIMD1, WTIP and AJUBA. Interacts with APOBEC3G in an RNA-dependent manner. Interacts with LARP1. Interacts with METTL3. Interacts with RBM24; this interaction prevents EIF4E from binding to p53/TP53 mRNA and inhibits the assembly of translation initiation complex. Interacts with DDX3X; interaction is direct and in an RNA-independent manner; this interaction enhances EIF4E cap-binding ability and is required for the repression of cap-dependent translation and the increase of IRES-mediated translation. DDX3X competes with EIF4G1 for interaction with EIF4E. Interacts with EIF4G1; which in a mutual exclusive interaction associates either with EIF1 or with EIF4E on a common binding site. Interacts with BTG4 and CNOT7. Interacts with LRPPRC (via N-terminus); the interaction promotes association of EIF4E with 4ESE-containing mRNAs. Interacts with mRNA cleavage enzyme CPSF3 and its cofactor CPSF1. Interacts (via RING-type zinc finger) with PML; the interaction results in conformational changes of both interacting proteins and reduces EIF4E affinity for the 5' m7G cap of mRNA, thus reducing EIF4E-mediated mRNA nuclear export. Interacts with homeobox protein HHEX/PRH; the interaction inhibits EIF4E-mediated mRNA nuclear export. Interacts with homeobox protein HOXA9; the interaction positively regulates EIF4E-mediated mRNA nuclear export. Interacts with homeobox protein EMX2. As to quaternary structure, (Microbial infection) Interacts with Lassa virus Z protein. In terms of assembly, (Microbial infection) Interacts with Lymphocytic choriomeningitis virus (LCMV) Z protein (via RING-type zinc finger); the interaction results in conformational changes of both interacting proteins and reduces EIF4E affinity for the m7G mRNA cap structure. (Microbial infection) Interacts (via cap-binding region) with potato virus Y VPg; this interaction mediates the translation of the VPg-viral RNA conjugates and interferes with the cellular EIF4E-dependent mRNA export and translation. Post-translationally, phosphorylation increases the ability of the protein to bind to mRNA caps and to form the eIF4F complex. Phosphorylation also enhances its mRNA transport function. Phosphorylation at Ser-209 is not essential for protein synthesis.

Its subcellular location is the cytoplasm. The protein resides in the P-body. It localises to the stress granule. It is found in the nucleus. The protein localises to the nucleus speckle. Its subcellular location is the nuclear body. In terms of biological role, acts in the cytoplasm to initiate and regulate protein synthesis and is required in the nucleus for export of a subset of mRNAs from the nucleus to the cytoplasm which promotes processes such as RNA capping, processing and splicing. Component of the protein complex eIF4F, which is involved in the recognition of the mRNA cap, ATP-dependent unwinding of 5'-terminal secondary structure and recruitment of mRNA to the ribosome. This protein recognizes and binds the 7-methylguanosine (m7G)-containing mRNA cap during an early step in the initiation of protein synthesis and facilitates ribosome binding by inducing the unwinding of the mRNAs secondary structures. Together with EIF4G1, antagonizes the scanning promoted by EIF1-EIF4G1 and is required for TISU translation, a process where the TISU element recognition makes scanning unnecessary. In addition to its role in translation initiation, also acts as a regulator of translation and stability in the cytoplasm. Component of the CYFIP1-EIF4E-FMR1 complex which binds to the mRNA cap and mediates translational repression: in the complex, EIF4E mediates the binding to the mRNA cap. Component of a multiprotein complex that sequesters and represses translation of proneurogenic factors during neurogenesis. In P-bodies, component of a complex that mediates the storage of translationally inactive mRNAs in the cytoplasm and prevents their degradation. May play an important role in spermatogenesis through translational regulation of stage-specific mRNAs during germ cell development. As well as its roles in translation, also involved in mRNA nucleocytoplasmic transport. Its role in mRNA export from the nucleus to the cytoplasm relies on its ability to bind the m7G cap of RNAs and on the presence of the 50-nucleotide EIF4E sensitivity element (4ESE) in the 3'UTR of sensitive transcripts. Interaction with the 4ESE is mediated by LRPPRC which binds simultaneously to both EIF4E and the 4ESE, thereby acting as a platform for assembly for the RNA export complex. EIF4E-dependent mRNA export is independent of ongoing protein or RNA synthesis and is also NFX1-independent but is XPO1-dependent with LRPPRC interacting with XPO1 to form an EIF4E-dependent mRNA export complex. Alters the composition of the cytoplasmic face of the nuclear pore to promote RNA export by reducing RANBP2 expression, relocalizing nucleoporin NUP214 and increasing expression of RANBP1 and RNA export factors DDX19 and GLE1. Promotes the nuclear export of cyclin CCND1 mRNA. Promotes the nuclear export of NOS2/iNOS mRNA. Promotes the nuclear export of MDM2 mRNA. Promotes the export of additional mRNAs, including others involved in the cell cycle. In the nucleus, binds to capped splice factor-encoding mRNAs and stimulates their nuclear export to enhance splice factor production by increasing their cytoplasmic availability to the translation machinery. May also regulate splicing through interaction with the spliceosome in an RNA and m7G cap-dependent manner. Also binds to some pre-mRNAs and may play a role in their recruitment to the spliceosome. Promotes steady-state capping of a subset of coding and non-coding RNAs by mediating nuclear export of capping machinery mRNAs including RNMT, RNGTT and RAMAC to enhance their translation. Stimulates mRNA 3'-end processing by promoting the expression of several core cleavage complex factors required for mRNA cleavage and polyadenylation, and may also have a direct effect through its interaction with the CPSF3 cleavage enzyme. Rescues cells from apoptosis by promoting activation of serine/threonine-protein kinase AKT1 through mRNA export of NBS1 which potentiates AKT1 phosphorylation and also through mRNA export of AKT1 effectors, allowing for increased production of these proteins. The protein is Eukaryotic translation initiation factor 4E of Homo sapiens (Human).